A 303-amino-acid polypeptide reads, in one-letter code: GTPase Era (303 aa).

Residues 8-176 form the Era-type G domain; the sequence is YCGFIAIVGR…ASIVRKHMPE (169 aa). The G1 stretch occupies residues 16–23; it reads GRPNVGKS. 16–23 contributes to the GTP binding site; sequence GRPNVGKS. Positions 42–46 are G2; it reads QTTRH. The G3 stretch occupies residues 63 to 66; it reads DTPG. GTP is bound by residues 63 to 67 and 125 to 128; these read DTPGL and NKVD. The G4 stretch occupies residues 125 to 128; the sequence is NKVD. The G5 stretch occupies residues 155-157; it reads ISA. One can recognise a KH type-2 domain in the interval 207–284; that stretch reads LGEELPYSVT…HLELWVKVKS (78 aa).

The protein belongs to the TRAFAC class TrmE-Era-EngA-EngB-Septin-like GTPase superfamily. Era GTPase family. In terms of assembly, monomer.

The protein localises to the cytoplasm. The protein resides in the cell inner membrane. Functionally, an essential GTPase that binds both GDP and GTP, with rapid nucleotide exchange. Plays a role in 16S rRNA processing and 30S ribosomal subunit biogenesis and possibly also in cell cycle regulation and energy metabolism. The polypeptide is GTPase Era (Yersinia enterocolitica serotype O:8 / biotype 1B (strain NCTC 13174 / 8081)).